We begin with the raw amino-acid sequence, 157 residues long: SsrA-binding protein (157 aa).

The tract at residues 134 to 157 is disordered; the sequence is HDKRESEKKRDWGREKGRLLRARG. Over residues 135–151 the composition is skewed to basic and acidic residues; sequence DKRESEKKRDWGREKGR.

It belongs to the SmpB family.

The protein localises to the cytoplasm. Its function is as follows. Required for rescue of stalled ribosomes mediated by trans-translation. Binds to transfer-messenger RNA (tmRNA), required for stable association of tmRNA with ribosomes. tmRNA and SmpB together mimic tRNA shape, replacing the anticodon stem-loop with SmpB. tmRNA is encoded by the ssrA gene; the 2 termini fold to resemble tRNA(Ala) and it encodes a 'tag peptide', a short internal open reading frame. During trans-translation Ala-aminoacylated tmRNA acts like a tRNA, entering the A-site of stalled ribosomes, displacing the stalled mRNA. The ribosome then switches to translate the ORF on the tmRNA; the nascent peptide is terminated with the 'tag peptide' encoded by the tmRNA and targeted for degradation. The ribosome is freed to recommence translation, which seems to be the essential function of trans-translation. This chain is SsrA-binding protein, found in Nitrobacter hamburgensis (strain DSM 10229 / NCIMB 13809 / X14).